The following is a 435-amino-acid chain: Citrate synthase (435 aa).

Residues H311 and D370 contribute to the active site.

The protein belongs to the citrate synthase family. As to quaternary structure, homohexamer.

The catalysed reaction is oxaloacetate + acetyl-CoA + H2O = citrate + CoA + H(+). It functions in the pathway carbohydrate metabolism; tricarboxylic acid cycle; isocitrate from oxaloacetate: step 1/2. The sequence is that of Citrate synthase (gltA) from Rickettsia africae (strain ESF-5).